We begin with the raw amino-acid sequence, 449 residues long: Trigger factor (449 aa).

Residues glycine 169 to leucine 254 enclose the PPIase FKBP-type domain.

The protein belongs to the FKBP-type PPIase family. Tig subfamily.

The protein localises to the cytoplasm. It carries out the reaction [protein]-peptidylproline (omega=180) = [protein]-peptidylproline (omega=0). Its function is as follows. Involved in protein export. Acts as a chaperone by maintaining the newly synthesized protein in an open conformation. Functions as a peptidyl-prolyl cis-trans isomerase. This Azorhizobium caulinodans (strain ATCC 43989 / DSM 5975 / JCM 20966 / LMG 6465 / NBRC 14845 / NCIMB 13405 / ORS 571) protein is Trigger factor.